The chain runs to 320 residues: Arginine/serine-rich protein 1 (320 aa).

Residues 1–22 (MKTEASPGRLHEDVKLIFDKKA) show a composition bias toward basic and acidic residues. Disordered stretches follow at residues 1 to 180 (MKTE…SRER) and 215 to 299 (LKEM…ADIV). 2 stretches are compositionally biased toward low complexity: residues 24-48 (SGRSSSCSSSSSSSSGSSYSSSRGS) and 56-74 (TSSSSRSSSSGSSSSSNSR). Composition is skewed to basic residues over residues 75–102 (SRSRPRCSGRVHCRHRHRSPPRRYRARS), 114–158 (RRRH…RYRC), and 166–175 (RSPRPYRSRS). A phosphoserine mark is found at S135 and S137. Over residues 215 to 238 (LKEMEQQEERKRRSSSDEEERVRV) the composition is skewed to basic and acidic residues. The span at 271-293 (VFSNNNAIAKPSSSPTLSDSKVT) shows a compositional bias: polar residues.

Belongs to the RSRP family. In terms of processing, phosphorylated. Phosphorylation at Ser-135 and Ser-137 mediates the interaction with spliceosome proteins.

The protein resides in the nucleus. Probably acts as a spliceosomal factor that contributes to spliceosome assembly and regulates the isoform switching of proteins such as PARP6. This is Arginine/serine-rich protein 1 (rsrp1) from Danio rerio (Zebrafish).